We begin with the raw amino-acid sequence, 336 residues long: tRNA N6-adenosine threonylcarbamoyltransferase (336 aa).

Fe cation is bound by residues His-114 and His-118. Residues 136–140 (LVSGG), Asp-169, Gly-182, Asp-186, and Asn-275 each bind substrate. Asp-301 contributes to the Fe cation binding site.

It belongs to the KAE1 / TsaD family. Requires Fe(2+) as cofactor.

The protein localises to the cytoplasm. The catalysed reaction is L-threonylcarbamoyladenylate + adenosine(37) in tRNA = N(6)-L-threonylcarbamoyladenosine(37) in tRNA + AMP + H(+). Functionally, required for the formation of a threonylcarbamoyl group on adenosine at position 37 (t(6)A37) in tRNAs that read codons beginning with adenine. Is involved in the transfer of the threonylcarbamoyl moiety of threonylcarbamoyl-AMP (TC-AMP) to the N6 group of A37, together with TsaE and TsaB. TsaD likely plays a direct catalytic role in this reaction. The sequence is that of tRNA N6-adenosine threonylcarbamoyltransferase from Streptococcus pneumoniae serotype 2 (strain D39 / NCTC 7466).